We begin with the raw amino-acid sequence, 235 residues long: Claudin-16 (235 aa).

Over methionine 1–aspartate 3 the chain is Cytoplasmic. Residues leucine 4–threonine 24 traverse the membrane as a helical segment. Residues arginine 25–arginine 79 are Extracellular-facing. Residues alanine 80–leucine 100 form a helical membrane-spanning segment. Over aspartate 101–arginine 115 the chain is Cytoplasmic. A helical membrane pass occupies residues leucine 116–valine 136. The Extracellular segment spans residues tryptophan 137–glycine 169. A helical transmembrane segment spans residues methionine 170–phenylalanine 190. At lysine 191–valine 235 the chain is on the cytoplasmic side. Residues threonine 233–valine 235 carry the Interaction with TJP1 motif.

The protein belongs to the claudin family. Can form heteropolymeric tight junction strands with other claudins. Interacts with CLDN19. Interacts (via PDZ-binding motif TRV) with TJP1 (via PDZ domain). Cannot form tight junction strands on its own.

The protein resides in the cell junction. Its subcellular location is the tight junction. It is found in the cell membrane. It catalyses the reaction Mg(2+)(in) = Mg(2+)(out). The catalysed reaction is Ca(2+)(in) = Ca(2+)(out). It carries out the reaction Na(+)(in) = Na(+)(out). The enzyme catalyses K(+)(in) = K(+)(out). It catalyses the reaction Rb(+)(in) = Rb(+)(out). The catalysed reaction is Cs(+)(in) = Cs(+)(out). It carries out the reaction Li(+)(in) = Li(+)(out). Functionally, forms paracellular channels: coassembles with CLDN19 into tight junction strands with cation-selective channels through the strands, conveying epithelial permeability in a process known as paracellular tight junction permeability. Involved in the maintenance of ion gradients along the nephron. In the thick ascending limb (TAL) of Henle's loop, facilitates sodium paracellular permeability from the interstitial compartment to the lumen, contributing to the lumen-positive transepithelial potential that drives paracellular magnesium and calcium reabsorption. The protein is Claudin-16 of Rattus norvegicus (Rat).